Consider the following 281-residue polypeptide: Large ribosomal subunit protein uL2 (281 aa).

Over residues 27–38 the composition is skewed to basic and acidic residues; that stretch reads DSPEKSLTEPLK. 2 disordered regions span residues 27–59 and 225–281; these read DSPE…GGHK and AMNP…ARSQ. Positions 45–59 are enriched in basic residues; the sequence is VHGHITRRHQGGGHK.

The protein belongs to the universal ribosomal protein uL2 family. In terms of assembly, part of the 50S ribosomal subunit. Forms a bridge to the 30S subunit in the 70S ribosome.

Functionally, one of the primary rRNA binding proteins. Required for association of the 30S and 50S subunits to form the 70S ribosome, for tRNA binding and peptide bond formation. It has been suggested to have peptidyltransferase activity; this is somewhat controversial. Makes several contacts with the 16S rRNA in the 70S ribosome. This is Large ribosomal subunit protein uL2 from Myxococcus xanthus (strain DK1622).